The sequence spans 301 residues: uncharacterized protein (301 aa).

The region spanning 27 to 85 is the FHA domain; that stretch reads YKIGRHTNKSTSPSPSNLFFNSKVLSRQHAELWLDKDTLSVYIRDVKSSNGTFVNETRL. Residues 187–236 form a disordered region; that stretch reads TGKTRDNRNNHHYSRKSSPHISSLAVPSTKHLDGERDRNLKRSTSPLSSS. Position 204 is a phosphoserine (Ser-204). Positions 216 to 226 are enriched in basic and acidic residues; it reads KHLDGERDRNL. At Ser-231 the chain carries Phosphoserine.

As to quaternary structure, interacts with sad1.

It is found in the nucleus. This is an uncharacterized protein from Schizosaccharomyces pombe (strain 972 / ATCC 24843) (Fission yeast).